The primary structure comprises 189 residues: Capsid protein (189 aa).

This sequence belongs to the tymoviruses capsid protein family.

Its subcellular location is the virion. In terms of biological role, self-assembles to form a T=3 icosahedral capsid composed of 180 copies of the capsid protein. The capsid encapsulates the single-stranded RNA genome. A pentameric unit may be lost during decapsidation. This is Capsid protein from Brassica.